A 320-amino-acid chain; its full sequence is Olfactory receptor 2C3 (320 aa).

Residues 1-26 (MMEIANVSSPEVFVLLGFSTRPSLET) lie on the Extracellular side of the membrane. Asn-6 carries an N-linked (GlcNAc...) asparagine glycan. Residues 27-50 (VLFIVVLSFYMVSILGNGIIILVS) traverse the membrane as a helical segment. Topologically, residues 51 to 58 (HTDVHLHT) are cytoplasmic. The helical transmembrane segment at 59 to 80 (PMYFFLANLPFLDMSFTTSIVP) threads the bilayer. Residues 81 to 101 (QLLANLWGPQKTISYGGCVVQ) lie on the Extracellular side of the membrane. A disulfide bond links Cys-98 and Cys-190. A helical transmembrane segment spans residues 102-121 (FYISHWLGATECVLLATMSY). The Cytoplasmic segment spans residues 122 to 140 (DRYAAICRPLHYTVIMHPQ). The chain crosses the membrane as a helical span at residues 141 to 159 (LCLGLALASWLGGLTTSMV). Over 160 to 196 (GSTLTMLLPLCGNNCIDHFFCEMPLIMQLACVDTSLN) the chain is Extracellular. The helical transmembrane segment at 197–220 (EMEMYLASFVFVVLPLGLILVSYG) threads the bilayer. At 221 to 237 (HIARAVLKIRSAEGRRK) the chain is on the cytoplasmic side. Residues 238 to 260 (AFNTCSSHVAVVSLFYGSIIFMY) form a helical membrane-spanning segment. At 261 to 273 (LQPAKSTSHEQGK) the chain is on the extracellular side. The chain crosses the membrane as a helical span at residues 274-293 (FIALFYTVVTPALNPLIYTL). The Cytoplasmic segment spans residues 294–320 (RNTEVKSALRHMVLENCCGSAGKLAQI).

It belongs to the G-protein coupled receptor 1 family.

It is found in the cell membrane. Functionally, odorant receptor. The protein is Olfactory receptor 2C3 (OR2C3) of Homo sapiens (Human).